We begin with the raw amino-acid sequence, 100 residues long: Putative sodium channel toxin Ts26 (100 aa).

An N-terminal signal peptide occupies residues 1 to 22; the sequence is MVKSAMKIVILILFVLLIRVES. The LCN-type CS-alpha/beta domain maps to 24–92; it reads RNGYPDISDG…VMDTTIEYCE (69 aa). Intrachain disulfides connect cysteine 38-cysteine 64, cysteine 50-cysteine 69, cysteine 54-cysteine 71, and cysteine 65-cysteine 91.

The protein belongs to the long (4 C-C) scorpion toxin superfamily. Sodium channel inhibitor family. As to expression, expressed by the venom gland.

Its subcellular location is the secreted. Functionally, putative sodium channel toxin. This chain is Putative sodium channel toxin Ts26, found in Tityus serrulatus (Brazilian scorpion).